The primary structure comprises 136 residues: MTERTLILIKPDGVKNGHVGEIISRIEKKGLKLVELDLRTADRETAEKHYAEHSDKPFFGELVDFITSAPLVAGIVEGESAIAAWRQLAGGTHPVEKATPGTIRGDFALTVGENVVHGSDSPESAEREIGIWFPNL.

ATP contacts are provided by K10, F58, R86, T92, R104, and N114. H117 functions as the Pros-phosphohistidine intermediate in the catalytic mechanism.

It belongs to the NDK family. Homotetramer. Mg(2+) serves as cofactor.

Its subcellular location is the cytoplasm. It carries out the reaction a 2'-deoxyribonucleoside 5'-diphosphate + ATP = a 2'-deoxyribonucleoside 5'-triphosphate + ADP. It catalyses the reaction a ribonucleoside 5'-diphosphate + ATP = a ribonucleoside 5'-triphosphate + ADP. Its function is as follows. Major role in the synthesis of nucleoside triphosphates other than ATP. The ATP gamma phosphate is transferred to the NDP beta phosphate via a ping-pong mechanism, using a phosphorylated active-site intermediate. The polypeptide is Nucleoside diphosphate kinase (Corynebacterium jeikeium (strain K411)).